We begin with the raw amino-acid sequence, 59 residues long: Cecropin-C type 2 (59 aa).

Positions 1–23 (MNFAKVFVLVAMAVLLLVGQSEA) are cleaved as a signal peptide.

It belongs to the cecropin family.

The protein resides in the secreted. In terms of biological role, cecropins have lytic and antibacterial activity against several Gram-positive and Gram-negative bacteria. The polypeptide is Cecropin-C type 2 (CECC2) (Aedes albopictus (Asian tiger mosquito)).